Here is a 214-residue protein sequence, read N- to C-terminus: Adenylate kinase (214 aa).

ATP is bound at residue 10–15; it reads GAGKGT. An NMP region spans residues 30-59; that stretch reads STGDMLRAAVKAGTPLGLEAKKVMDAGQLV. AMP contacts are provided by residues threonine 31, arginine 36, 57-59, 85-88, and glutamine 92; these read QLV and GFPR. The LID stretch occupies residues 122–159; sequence GRRVHPGSGRVYHIVFNQPKVEGKDDVTGEDLAIRPDD. Residues arginine 123 and 132 to 133 contribute to the ATP site; that span reads VY. AMP is bound by residues arginine 156 and arginine 167. Glutamine 200 is a binding site for ATP.

The protein belongs to the adenylate kinase family. As to quaternary structure, monomer.

The protein resides in the cytoplasm. It carries out the reaction AMP + ATP = 2 ADP. It functions in the pathway purine metabolism; AMP biosynthesis via salvage pathway; AMP from ADP: step 1/1. Functionally, catalyzes the reversible transfer of the terminal phosphate group between ATP and AMP. Plays an important role in cellular energy homeostasis and in adenine nucleotide metabolism. This Shewanella piezotolerans (strain WP3 / JCM 13877) protein is Adenylate kinase.